A 447-amino-acid chain; its full sequence is RNA-binding protein 208 (447 aa).

2 RRM domains span residues 73-147 (RSVY…WAYA) and 158-236 (FHIF…WATK). Over residues 254-269 (TNGSSSNPGMEASQDT) the composition is skewed to polar residues. Disordered stretches follow at residues 254–279 (TNGSSSNPGMEASQDTGSKENPENNP) and 353–372 (WGNKPTPPGTSSKPLPPPLP). An RRM 3 domain is found at 282-356 (TTVYVGNLGH…KPIKCSWGNK (75 aa)).

As to quaternary structure, interacts with RBP-P.

In terms of biological role, RNA-binding protein. The protein is RNA-binding protein 208 of Oryza sativa subsp. japonica (Rice).